A 919-amino-acid polypeptide reads, in one-letter code: MFS-type transporter clz9 (919 aa).

Over residues 1-11 (MAASTKPTTKL) the composition is skewed to polar residues. Residues 1–33 (MAASTKPTTKLSTEEDDVSRRDSESSADFMKSN) form a disordered region. Residues 69–89 (VVASFAAAISPFSTSTYYPVV) form a helical membrane-spanning segment. A glycan (N-linked (GlcNAc...) asparagine) is linked at N104. A run of 3 helical transmembrane segments spans residues 132-152 (PMFLVCFVTYFVANVGLALQN), 192-212 (LIYATLGSTLGPFIGPVIGGL), and 222-242 (VFWFLLCMGTVFALLIFIFFG). Residue N260 is glycosylated (N-linked (GlcNAc...) asparagine). Helical transmembrane passes span 303–323 (FILSVSGGLLYAGYSSVTSVL), 333–353 (YDAVQVGLCYLPVGFGSLLAY), 393–413 (LGFVFPMILVCSGLLVAYGWQ), and 418–438 (APLAPILVTMFLIAIILTGVM). N-linked (GlcNAc...) asparagine glycosylation occurs at N461. A helical membrane pass occupies residues 465–485 (LLLGAGAVAVVGPLNKSAGIG). Residues 641 to 809 (REWVTLIQGI…FTSANICSSF (169 aa)) enclose the DDE-1 domain. Residues 840-897 (EAPWEAKTPSNRKKKQIQKRGTLTKGEGEDTLAQKEADQQIEREQRQGGEQSGRSRQA) are disordered. Residues 865-886 (GEGEDTLAQKEADQQIEREQRQ) show a composition bias toward basic and acidic residues. A compositionally biased stretch (low complexity) spans 887–896 (GGEQSGRSRQ). N-linked (GlcNAc...) asparagine glycosylation occurs at N915.

It belongs to the major facilitator superfamily. CAR1 family.

It is found in the membrane. Functionally, MFS-type transporter; part of the gene cluster that mediates the biosynthesis of squalestatin S1 (SQS1, also known as zaragozic acid A), a heavily oxidized fungal polyketide that offers potent cholesterol lowering activity by targeting squalene synthase (SS). The polypeptide is MFS-type transporter clz9 (Cochliobolus lunatus (Filamentous fungus)).